The chain runs to 422 residues: Serine--tRNA ligase (422 aa).

229 to 231 (TAE) contributes to the L-serine binding site. An ATP-binding site is contributed by 260 to 262 (RKE). Glu283 contacts L-serine. An ATP-binding site is contributed by 347–350 (EISS). Residue Ser383 coordinates L-serine.

The protein belongs to the class-II aminoacyl-tRNA synthetase family. Type-1 seryl-tRNA synthetase subfamily. In terms of assembly, homodimer. The tRNA molecule binds across the dimer.

It localises to the cytoplasm. The enzyme catalyses tRNA(Ser) + L-serine + ATP = L-seryl-tRNA(Ser) + AMP + diphosphate + H(+). The catalysed reaction is tRNA(Sec) + L-serine + ATP = L-seryl-tRNA(Sec) + AMP + diphosphate + H(+). The protein operates within aminoacyl-tRNA biosynthesis; selenocysteinyl-tRNA(Sec) biosynthesis; L-seryl-tRNA(Sec) from L-serine and tRNA(Sec): step 1/1. Catalyzes the attachment of serine to tRNA(Ser). Is also able to aminoacylate tRNA(Sec) with serine, to form the misacylated tRNA L-seryl-tRNA(Sec), which will be further converted into selenocysteinyl-tRNA(Sec). This is Serine--tRNA ligase from Geobacter sp. (strain M21).